A 371-amino-acid polypeptide reads, in one-letter code: Loganic acid O-methyltransferase (371 aa).

Position 31 (tyrosine 31) interacts with S-adenosyl-L-homocysteine. The loganate site is built by tyrosine 37 and glutamine 38. Positions 78, 83, 114, 115, 141, and 142 each coordinate S-adenosyl-L-homocysteine. Positions 162 and 163 each coordinate loganate. Asparagine 180 serves as a coordination point for Mg(2+). Positions 241 and 245 each coordinate loganate. Residues aspartate 267, phenylalanine 269, and asparagine 270 each contribute to the Mg(2+) site. Loganate is bound by residues glutamine 273 and glutamine 316.

The protein belongs to the methyltransferase superfamily. Type-7 methyltransferase family. In terms of assembly, homodimer. Mg(2+) is required as a cofactor. As to expression, expressed in leaves (especially in leaf epidermis), flowers, siliques and stems, and, at low levels, in hairy roots.

The enzyme catalyses loganate + S-adenosyl-L-methionine = loganin + S-adenosyl-L-homocysteine. It functions in the pathway alkaloid biosynthesis. With respect to regulation, strongly repressed by loganin and slightly by S-adenosyl-L-homocysteine. In terms of biological role, component of the seco-iridoid and derivatives monoterpenoid indole alkaloids (MIAs, e.g. vinblastine and ajmalicine) biosynthesis pathway. Catalyzes the methylation of loganic acid (6S,7R) to produce loganin. Weak activity with secologanic acid as substrate. Inactive on deoxyloganic, dehydrologanic, epiloganic and loganetic acid. The chain is Loganic acid O-methyltransferase from Catharanthus roseus (Madagascar periwinkle).